A 1055-amino-acid chain; its full sequence is Type I restriction enzyme HindI endonuclease subunit (1055 aa).

One can recognise a Helicase ATP-binding domain in the interval 287-468 (TSEKGDRRIG…QDVFGRYVSI (182 aa)).

The protein belongs to the HsdR family. In terms of assembly, the type I restriction/modification system is composed of three polypeptides R, M and S; the restriction enzyme has stoichiometry R(2)M(2)S(1) while the methyltransferase is M(2)S(1).

It carries out the reaction Endonucleolytic cleavage of DNA to give random double-stranded fragments with terminal 5'-phosphates, ATP is simultaneously hydrolyzed.. The restriction (R) subunit of a type I restriction enzyme that recognizes 5'-RAACN(5)TAG-3' and cleaves a random distance away. Subunit R is required for both nuclease and ATPase activities, but not for modification. After locating a non-methylated recognition site, the enzyme complex serves as a molecular motor that translocates DNA in an ATP-dependent manner until a collision occurs that triggers cleavage. This chain is Type I restriction enzyme HindI endonuclease subunit, found in Haemophilus influenzae (strain ATCC 51907 / DSM 11121 / KW20 / Rd).